We begin with the raw amino-acid sequence, 24 residues long: Brevinin-1E (24 aa).

A disulfide bond links cysteine 18 and cysteine 24.

As to expression, expressed by the skin glands.

The protein resides in the secreted. Antimicrobial peptide. Stimulates insulin release by BRIN-BD11 cells in vitro. The chain is Brevinin-1E from Pelophylax saharicus (Sahara frog).